The primary structure comprises 231 residues: 7-cyano-7-deazaguanine synthase (231 aa).

8-18 is a binding site for ATP; the sequence is FSGGQDSTTCL. The Zn(2+) site is built by Cys188, Cys197, Cys200, and Cys203.

This sequence belongs to the QueC family. It depends on Zn(2+) as a cofactor.

The catalysed reaction is 7-carboxy-7-deazaguanine + NH4(+) + ATP = 7-cyano-7-deazaguanine + ADP + phosphate + H2O + H(+). It functions in the pathway purine metabolism; 7-cyano-7-deazaguanine biosynthesis. In terms of biological role, catalyzes the ATP-dependent conversion of 7-carboxy-7-deazaguanine (CDG) to 7-cyano-7-deazaguanine (preQ(0)). The protein is 7-cyano-7-deazaguanine synthase of Escherichia fergusonii (strain ATCC 35469 / DSM 13698 / CCUG 18766 / IAM 14443 / JCM 21226 / LMG 7866 / NBRC 102419 / NCTC 12128 / CDC 0568-73).